A 390-amino-acid polypeptide reads, in one-letter code: O-glycoside alpha-1,2-mannosyltransferase omh1 (390 aa).

Glu-279 functions as the Nucleophile in the catalytic mechanism.

Belongs to the glycosyltransferase 15 family.

It is found in the endoplasmic reticulum. Its subcellular location is the golgi apparatus. Mannosyltransferase involved in O-glycosylation of cell wall and secreted proteins. Plays a major role in extending alpha-1,2-linked mannose in the O-glycan pathway. This Schizosaccharomyces pombe (strain 972 / ATCC 24843) (Fission yeast) protein is O-glycoside alpha-1,2-mannosyltransferase omh1 (omh1).